An 84-amino-acid chain; its full sequence is Cell division topological specificity factor (84 aa).

Belongs to the MinE family.

In terms of biological role, prevents the cell division inhibition by proteins MinC and MinD at internal division sites while permitting inhibition at polar sites. This ensures cell division at the proper site by restricting the formation of a division septum at the midpoint of the long axis of the cell. The polypeptide is Cell division topological specificity factor (Paraburkholderia phytofirmans (strain DSM 17436 / LMG 22146 / PsJN) (Burkholderia phytofirmans)).